The sequence spans 432 residues: Tyrosine-protein phosphatase non-receptor type 1 (432 aa).

At methionine 1 the chain carries N-acetylmethionine. A Tyrosine-protein phosphatase domain is found at 3–277; the sequence is MEKEFEQIDK…RFSYLAVIEG (275 aa). Tyrosine 20 bears the Phosphotyrosine mark. Serine 50 is modified (phosphoserine; by PKB/AKT1, CLK1 and CLK2). At tyrosine 66 the chain carries Phosphotyrosine; by EGFR. Substrate contacts are provided by residues aspartate 181 and 215–221; that span reads CSAGIGR. Cysteine 215 acts as the Phosphocysteine intermediate in catalysis. At cysteine 215 the chain carries Cysteine persulfide. An S-nitrosocysteine; in reversibly inhibited form modification is found at cysteine 215. Residues serine 242 and serine 243 each carry the phosphoserine; by CLK1 and CLK2 modification. Glutamine 262 lines the substrate pocket. The interval 297-322 is disordered; that stretch reads EDLEPPPEHVPPPPRPPKRTLEPHNG. Phosphoserine is present on residues serine 335, serine 362, and serine 364. Positions 350–402 are disordered; it reads SRAPSIAVHSMSSMSQDTEVRKRMVGGGLQSAQASVPTEEELSPTEEEQKAHR. A Phosphothreonine modification is found at threonine 367.

This sequence belongs to the protein-tyrosine phosphatase family. Non-receptor class 1 subfamily. As to quaternary structure, interacts with EPHA3 (phosphorylated); dephosphorylates EPHA3 and may regulate its trafficking and function. Interacts with MET. Interacts with NCK1. Post-translationally, ser-50 is the major site of phosphorylation as compared to Ser-242 and Ser-243. Activated by phosphorylation at Ser-50. In terms of processing, S-nitrosylation of Cys-215 inactivates the enzyme activity. Sulfhydration at Cys-215 following endoplasmic reticulum stress inactivates the enzyme activity, promoting EIF2AK3/PERK activity. In terms of tissue distribution, found in several tissues including central nervous system, liver and kidney. A high level of expression was found in the hippocampus.

It localises to the endoplasmic reticulum membrane. The enzyme catalyses O-phospho-L-tyrosyl-[protein] + H2O = L-tyrosyl-[protein] + phosphate. In terms of biological role, tyrosine-protein phosphatase which acts as a regulator of endoplasmic reticulum unfolded protein response. Mediates dephosphorylation of EIF2AK3/PERK; inactivating the protein kinase activity of EIF2AK3/PERK. May play an important role in CKII- and p60c-src-induced signal transduction cascades. May regulate the EFNA5-EPHA3 signaling pathway which modulates cell reorganization and cell-cell repulsion. May also regulate the hepatocyte growth factor receptor signaling pathway through dephosphorylation of MET. The chain is Tyrosine-protein phosphatase non-receptor type 1 (Ptpn1) from Rattus norvegicus (Rat).